Reading from the N-terminus, the 304-residue chain is Putative S-adenosyl-L-methionine-dependent methyltransferase MAP_3385 (304 aa).

Residues D129 and 158 to 159 (DL) each bind S-adenosyl-L-methionine.

It belongs to the UPF0677 family.

Functionally, exhibits S-adenosyl-L-methionine-dependent methyltransferase activity. The polypeptide is Putative S-adenosyl-L-methionine-dependent methyltransferase MAP_3385 (Mycolicibacterium paratuberculosis (strain ATCC BAA-968 / K-10) (Mycobacterium paratuberculosis)).